A 318-amino-acid chain; its full sequence is Putative S-adenosyl-L-methionine-dependent methyltransferase BCG_0781c (318 aa).

S-adenosyl-L-methionine contacts are provided by residues Asp-135 and 164 to 165 (DL).

The protein belongs to the UPF0677 family.

In terms of biological role, exhibits S-adenosyl-L-methionine-dependent methyltransferase activity. The polypeptide is Putative S-adenosyl-L-methionine-dependent methyltransferase BCG_0781c (Mycobacterium bovis (strain BCG / Pasteur 1173P2)).